Here is a 273-residue protein sequence, read N- to C-terminus: Salivary glue protein Sgs-3 (273 aa).

A signal peptide spans 1–23; the sequence is MKLTIAISLASILLLSVAHVAQG. Over residues 47-57 the composition is skewed to low complexity; it reads TTTTTTTTCAP. A disordered region spans residues 47-225; sequence TTTTTTTTCA…TPKPTNKPGC (179 aa). Positions 58–67 are enriched in pro residues; sequence PTRPPPPPCT. The segment covering 83–225 has biased composition (low complexity); sequence RRTTTTTRQT…TPKPTNKPGC (143 aa).

The polypeptide is Salivary glue protein Sgs-3 (Sgs3) (Drosophila yakuba (Fruit fly)).